Here is a 61-residue protein sequence, read N- to C-terminus: Photosystem II reaction center protein Z (61 aa).

2 helical membrane passes run Leu5–Ala25 and Thr38–Ala58.

The protein belongs to the PsbZ family. In terms of assembly, PSII is composed of 1 copy each of membrane proteins PsbA, PsbB, PsbC, PsbD, PsbE, PsbF, PsbH, PsbI, PsbJ, PsbK, PsbL, PsbM, PsbT, PsbX, PsbY, PsbZ, Psb30/Ycf12, at least 3 peripheral proteins of the oxygen-evolving complex and a large number of cofactors. It forms dimeric complexes.

It is found in the plastid. The protein localises to the chloroplast thylakoid membrane. May control the interaction of photosystem II (PSII) cores with the light-harvesting antenna, regulates electron flow through the 2 photosystem reaction centers. PSII is a light-driven water plastoquinone oxidoreductase, using light energy to abstract electrons from H(2)O, generating a proton gradient subsequently used for ATP formation. The sequence is that of Photosystem II reaction center protein Z from Phaeodactylum tricornutum (strain CCAP 1055/1).